The chain runs to 526 residues: Cyclin-L1 (526 aa).

Residues 1-36 (MASGPHSTATAAAAASSAAPSAGGSSSGTTTTTTTT) form a disordered region. Cyclin-like stretches follow at residues 88-190 (ELIQ…RVLK) and 203-287 (KIIV…ETLR). Positions 318–526 (KGLNPDGTPA…SRSGHGRHRR (209 aa)) are disordered. T325 is modified (phosphothreonine). Residues S335 and S338 each carry the phosphoserine modification. Glycyl lysine isopeptide (Lys-Gly) (interchain with G-Cter in SUMO2) cross-links involve residues K339 and K347. Positions 342 to 352 (SPREVKAEEKS) are enriched in basic and acidic residues. Phosphoserine occurs at positions 352 and 355. A compositionally biased stretch (basic and acidic residues) spans 361 to 370 (VKKEPEDRQQ). A Glycyl lysine isopeptide (Lys-Gly) (interchain with G-Cter in SUMO2) cross-link involves residue K362. The residue at position 374 (S374) is a Phosphoserine. Composition is skewed to basic residues over residues 382–418 (DSKR…RRSR), 438–452 (RRHH…KAKH), 460–476 (SNRH…RSQS), and 486–498 (KKHR…HRDR). An RS region spans residues 390–432 (RSASRSRSRTRSRSRSHTPRRHYNNRRSRSGTYSSRSRSRSRS). Residue S445 is modified to Phosphoserine. Residues 499–508 (RERSRSFERS) show a composition bias toward basic and acidic residues. The segment covering 509–526 (HKSKHHGGSRSGHGRHRR) has biased composition (basic residues).

This sequence belongs to the cyclin family. Cyclin L subfamily. (Microbial infection) Interacts with human herpes virus 1 (HHV-1) transcriptional regulator ICP22. In terms of assembly, interacts with POLR2A via its hyperphosphorylated C-terminal domain (CTD). Interacts with CDK11A, CDK12 and CDK13. Isoforms 1 and 2, but not isoform 3, interact with CDK11B. May form a ternary complex with CDK11B and casein kinase II (CKII). Interacts with pre-mRNA-splicing factors, including at least SRSF1, SRSF2 and SRSF7/SLU7. Widely expressed. Overexpression in primary tumors of head and neck squamous cell carcinomas (HNSCC).

The protein resides in the nucleus speckle. It localises to the nucleus. It is found in the nucleoplasm. Involved in pre-mRNA splicing. Functions in association with cyclin-dependent kinases (CDKs). Inhibited by the CDK-specific inhibitor CDKN1A/p21. May play a role in the regulation of RNA polymerase II (pol II). May be a candidate proto-oncogene in head and neck squamous cell carcinomas (HNSCC). The polypeptide is Cyclin-L1 (CCNL1) (Homo sapiens (Human)).